The chain runs to 209 residues: LexA repressor (209 aa).

Positions 29–49 (VREIGSAIGLSSTSTVHGHID) form a DNA-binding region, H-T-H motif. Active-site for autocatalytic cleavage activity residues include serine 130 and lysine 168.

It belongs to the peptidase S24 family. Homodimer.

The catalysed reaction is Hydrolysis of Ala-|-Gly bond in repressor LexA.. Functionally, represses a number of genes involved in the response to DNA damage (SOS response), including recA and lexA. In the presence of single-stranded DNA, RecA interacts with LexA causing an autocatalytic cleavage which disrupts the DNA-binding part of LexA, leading to derepression of the SOS regulon and eventually DNA repair. The polypeptide is LexA repressor (Pediococcus pentosaceus (strain ATCC 25745 / CCUG 21536 / LMG 10740 / 183-1w)).